The chain runs to 116 residues: Iron-sulfur cluster insertion protein ErpA (116 aa).

3 residues coordinate iron-sulfur cluster: C44, C108, and C110.

Belongs to the HesB/IscA family. Homodimer. Iron-sulfur cluster is required as a cofactor.

Its function is as follows. Required for insertion of 4Fe-4S clusters for at least IspG. This chain is Iron-sulfur cluster insertion protein ErpA, found in Shewanella denitrificans (strain OS217 / ATCC BAA-1090 / DSM 15013).